A 542-amino-acid polypeptide reads, in one-letter code: Phosphoacetylglucosamine mutase (542 aa).

Met1 carries the post-translational modification N-acetylmethionine. Thr62 is subject to Phosphothreonine. The active-site Phosphoserine intermediate is Ser64. Mg(2+) is bound by residues Ser64, Asp276, Asp278, and Asp280. Residue Ser64 is modified to Phosphoserine. Substrate-binding positions include 370 to 372, 496 to 500, and Arg505; these read EAN and RPSGT.

Belongs to the phosphohexose mutase family. It depends on Mg(2+) as a cofactor.

It catalyses the reaction N-acetyl-alpha-D-glucosamine 1-phosphate = N-acetyl-D-glucosamine 6-phosphate. It functions in the pathway nucleotide-sugar biosynthesis; UDP-N-acetyl-alpha-D-glucosamine biosynthesis; N-acetyl-alpha-D-glucosamine 1-phosphate from alpha-D-glucosamine 6-phosphate (route I): step 2/2. With respect to regulation, inhibited by Mn(2+), Cd(2+), Zn(2+), Cu(2+) and Be(2+). Catalyzes the conversion of GlcNAc-6-P into GlcNAc-1-P during the synthesis of uridine diphosphate/UDP-GlcNAc, a sugar nucleotide critical to multiple glycosylation pathways including protein N- and O-glycosylation. This Sus scrofa (Pig) protein is Phosphoacetylglucosamine mutase.